Reading from the N-terminus, the 424-residue chain is Tyrosine--tRNA ligase (424 aa).

An L-tyrosine-binding site is contributed by Tyr37. The 'HIGH' region motif lies at 42–51 (ITADSLHVGH). Residues Tyr175 and Gln179 each contribute to the L-tyrosine site. The short motif at 235-239 (KFGKT) is the 'KMSKS' region element. Lys238 is a binding site for ATP. The S4 RNA-binding domain maps to 356–414 (GNLQQLLVYSRLALSRSHAKSMIVSNSVRINNIIQNNPFYILCNRDKMYHKYTLLSRGK).

The protein belongs to the class-I aminoacyl-tRNA synthetase family. TyrS type 1 subfamily. Homodimer.

The protein localises to the cytoplasm. The enzyme catalyses tRNA(Tyr) + L-tyrosine + ATP = L-tyrosyl-tRNA(Tyr) + AMP + diphosphate + H(+). Functionally, catalyzes the attachment of tyrosine to tRNA(Tyr) in a two-step reaction: tyrosine is first activated by ATP to form Tyr-AMP and then transferred to the acceptor end of tRNA(Tyr). This chain is Tyrosine--tRNA ligase, found in Buchnera aphidicola subsp. Baizongia pistaciae (strain Bp).